The following is a 307-amino-acid chain: N-acetylglucosamine-1-phosphotransferase subunit gamma (307 aa).

Residues 1-24 (MAGRLAGFLMLLGLASQGPAPAYA) form the signal peptide. One can recognise an MRH domain in the interval 69-171 (GKCFSLVEST…TFETPLVCHP (103 aa)). An intrachain disulfide couples C71 to C84. Residues N88 and N115 are each glycosylated (N-linked (GlcNAc...) asparagine). Intrachain disulfides connect C129–C157 and C142–C169. One can recognise a DMAP1-binding domain in the interval 176–279 (VYPTLSEALQ…HTQPTETTHS (104 aa)).

In terms of assembly, homodimer; disulfide-linked. Hexamer of two alpha (GNPTAB), two beta (GNPTAB) and two gamma (GNPTG) subunits; disulfide-linked. The alpha and/or the beta subunits of the enzyme constitute the catalytic subunits. In terms of processing, cys-245 mediates the formation of the interchain disulfide bond for formation of the homodimer. Cys-142, Cys-157 and Cys-169 are involved in intramolecular disulfide bonds formation. In terms of tissue distribution, widely expressed. Highly expressed in the liver, intestine, brain, thymus, testis and ovary.

It localises to the secreted. Its subcellular location is the golgi apparatus. Its function is as follows. Non-catalytic subunit of the N-acetylglucosamine-1-phosphotransferase complex, an enzyme that catalyzes the formation of mannose 6-phosphate (M6P) markers on high mannose type oligosaccharides in the Golgi apparatus. Binds and presents the high mannose glycans of the acceptor to the catalytic alpha and beta subunits (GNPTAB). Enhances the rate of N-acetylglucosamine-1-phosphate transfer to the oligosaccharides of acid hydrolase acceptors. This is N-acetylglucosamine-1-phosphotransferase subunit gamma (Gnptg) from Mus musculus (Mouse).